A 77-amino-acid polypeptide reads, in one-letter code: MKLTCMMIVAVLFLTAWTFVTADDSRNGLDYLFPKARHEMNPKASRDIKRCRPGGMICGFPKPGPYCCSGWCFVVCL.

The N-terminal stretch at 1–22 is a signal peptide; that stretch reads MKLTCMMIVAVLFLTAWTFVTA. A propeptide spanning residues 23-48 is cleaved from the precursor; sequence DDSRNGLDYLFPKARHEMNPKASRDI. 3 disulfides stabilise this stretch: C51–C68, C58–C72, and C67–C76.

The protein belongs to the conotoxin O1 superfamily. In terms of tissue distribution, expressed by the venom duct.

The protein resides in the secreted. This Conus ventricosus (Mediterranean cone) protein is Conotoxin VnMKLT1-012.